The chain runs to 183 residues: Peptide deformylase-like (183 aa).

E140 is an active-site residue.

This sequence belongs to the polypeptide deformylase family.

This chain is Peptide deformylase-like, found in Rickettsia conorii (strain ATCC VR-613 / Malish 7).